Reading from the N-terminus, the 423-residue chain is Gamma-glutamyl phosphate reductase (423 aa).

Belongs to the gamma-glutamyl phosphate reductase family.

It is found in the cytoplasm. The catalysed reaction is L-glutamate 5-semialdehyde + phosphate + NADP(+) = L-glutamyl 5-phosphate + NADPH + H(+). The protein operates within amino-acid biosynthesis; L-proline biosynthesis; L-glutamate 5-semialdehyde from L-glutamate: step 2/2. Functionally, catalyzes the NADPH-dependent reduction of L-glutamate 5-phosphate into L-glutamate 5-semialdehyde and phosphate. The product spontaneously undergoes cyclization to form 1-pyrroline-5-carboxylate. The sequence is that of Gamma-glutamyl phosphate reductase from Magnetococcus marinus (strain ATCC BAA-1437 / JCM 17883 / MC-1).